Here is a 103-residue protein sequence, read N- to C-terminus: Pyrimidine/purine nucleoside phosphorylase (103 aa).

It belongs to the nucleoside phosphorylase PpnP family.

The catalysed reaction is a purine D-ribonucleoside + phosphate = a purine nucleobase + alpha-D-ribose 1-phosphate. The enzyme catalyses adenosine + phosphate = alpha-D-ribose 1-phosphate + adenine. It carries out the reaction cytidine + phosphate = cytosine + alpha-D-ribose 1-phosphate. It catalyses the reaction guanosine + phosphate = alpha-D-ribose 1-phosphate + guanine. The catalysed reaction is inosine + phosphate = alpha-D-ribose 1-phosphate + hypoxanthine. The enzyme catalyses thymidine + phosphate = 2-deoxy-alpha-D-ribose 1-phosphate + thymine. It carries out the reaction uridine + phosphate = alpha-D-ribose 1-phosphate + uracil. It catalyses the reaction xanthosine + phosphate = alpha-D-ribose 1-phosphate + xanthine. In terms of biological role, catalyzes the phosphorolysis of diverse nucleosides, yielding D-ribose 1-phosphate and the respective free bases. Can use uridine, adenosine, guanosine, cytidine, thymidine, inosine and xanthosine as substrates. Also catalyzes the reverse reactions. The chain is Pyrimidine/purine nucleoside phosphorylase from Geobacter sp. (strain M21).